A 161-amino-acid chain; its full sequence is Allophycocyanin alpha chain (161 aa).

Asn-71 bears the N4-methylasparagine mark. Residue Cys-81 participates in (2R,3E)-phycocyanobilin binding.

It belongs to the phycobiliprotein family. Heterodimer of an alpha and a beta chain. Contains one covalently linked phycocyanobilin chromophore.

It localises to the plastid. It is found in the chloroplast thylakoid membrane. Its function is as follows. Light-harvesting photosynthetic bile pigment-protein from the phycobiliprotein complex. Allophycocyanin has a maximum absorption at approximately 650 nanometers. In Galdieria sulphuraria (Red alga), this protein is Allophycocyanin alpha chain (apcA).